We begin with the raw amino-acid sequence, 860 residues long: Leucine--tRNA ligase (860 aa).

A 'HIGH' region motif is present at residues 42–52 (PYPSGRLHMGH). The 'KMSKS' region motif lies at 619-623 (KMSKS). Lysine 622 lines the ATP pocket.

This sequence belongs to the class-I aminoacyl-tRNA synthetase family.

The protein localises to the cytoplasm. It carries out the reaction tRNA(Leu) + L-leucine + ATP = L-leucyl-tRNA(Leu) + AMP + diphosphate. The protein is Leucine--tRNA ligase of Escherichia coli (strain SE11).